Here is a 594-residue protein sequence, read N- to C-terminus: Arginine--tRNA ligase (594 aa).

The 'HIGH' region motif lies at 139 to 149 (ANPTGPLHVGH).

This sequence belongs to the class-I aminoacyl-tRNA synthetase family. Monomer.

It is found in the cytoplasm. The enzyme catalyses tRNA(Arg) + L-arginine + ATP = L-arginyl-tRNA(Arg) + AMP + diphosphate. In Paraburkholderia phymatum (strain DSM 17167 / CIP 108236 / LMG 21445 / STM815) (Burkholderia phymatum), this protein is Arginine--tRNA ligase.